The primary structure comprises 555 residues: Glutamate--tRNA ligase (555 aa).

Positions 100–110 (PNPSGPLHIGH) match the 'HIGH' region motif.

Belongs to the class-I aminoacyl-tRNA synthetase family. Glutamate--tRNA ligase type 2 subfamily.

It is found in the cytoplasm. The enzyme catalyses tRNA(Glu) + L-glutamate + ATP = L-glutamyl-tRNA(Glu) + AMP + diphosphate. Its function is as follows. Catalyzes the attachment of glutamate to tRNA(Glu) in a two-step reaction: glutamate is first activated by ATP to form Glu-AMP and then transferred to the acceptor end of tRNA(Glu). This chain is Glutamate--tRNA ligase, found in Methanococcus maripaludis (strain C6 / ATCC BAA-1332).